The sequence spans 353 residues: Photosystem II D2 protein (353 aa).

T2 carries the N-acetylthreonine modification. The residue at position 2 (T2) is a Phosphothreonine. A helical membrane pass occupies residues 41-61 (CAYFSLGGWFTGTTFVTSWYT). A chlorophyll a-binding site is contributed by H118. A helical transmembrane segment spans residues 125 to 141 (GFMLRQFELARSVQLRP). Positions 130 and 143 each coordinate pheophytin a. Residues 153 to 166 (VFVSVFLIYPLGQS) form a helical membrane-spanning segment. H198 is a binding site for chlorophyll a. The helical transmembrane segment at 208–228 (AALLCAIHGATVENTLFEDGD) threads the bilayer. 2 residues coordinate a plastoquinone: H215 and F262. Position 215 (H215) interacts with Fe cation. H269 is a Fe cation binding site. The chain crosses the membrane as a helical span at residues 279-295 (GLWMSAIGVVGLALNLR).

It belongs to the reaction center PufL/M/PsbA/D family. PSII is composed of 1 copy each of membrane proteins PsbA, PsbB, PsbC, PsbD, PsbE, PsbF, PsbH, PsbI, PsbJ, PsbK, PsbL, PsbM, PsbT, PsbX, PsbY, PsbZ, Psb30/Ycf12, at least 3 peripheral proteins of the oxygen-evolving complex and a large number of cofactors. It forms dimeric complexes. Requires The D1/D2 heterodimer binds P680, chlorophylls that are the primary electron donor of PSII, and subsequent electron acceptors. It shares a non-heme iron and each subunit binds pheophytin, quinone, additional chlorophylls, carotenoids and lipids. There is also a Cl(-1) ion associated with D1 and D2, which is required for oxygen evolution. The PSII complex binds additional chlorophylls, carotenoids and specific lipids. as cofactor.

It is found in the plastid. The protein resides in the chloroplast thylakoid membrane. It catalyses the reaction 2 a plastoquinone + 4 hnu + 2 H2O = 2 a plastoquinol + O2. Its function is as follows. Photosystem II (PSII) is a light-driven water:plastoquinone oxidoreductase that uses light energy to abstract electrons from H(2)O, generating O(2) and a proton gradient subsequently used for ATP formation. It consists of a core antenna complex that captures photons, and an electron transfer chain that converts photonic excitation into a charge separation. The D1/D2 (PsbA/PsbD) reaction center heterodimer binds P680, the primary electron donor of PSII as well as several subsequent electron acceptors. D2 is needed for assembly of a stable PSII complex. The protein is Photosystem II D2 protein of Physcomitrium patens (Spreading-leaved earth moss).